We begin with the raw amino-acid sequence, 534 residues long: Corneodesmosin (534 aa).

An N-terminal signal peptide occupies residues 1 to 32 (MGLSRAPWMGRVGGRGMMALLLAGLLLPGTLA). Disordered regions lie at residues 38 to 252 (FSDP…HSVS) and 396 to 497 (CSPF…GSAG). Composition is skewed to low complexity over residues 64-82 (GFSS…SSAS), 107-185 (GYSQ…SGSA), 200-236 (SQLG…SGGP), 397-415 (SPFS…SSGS), and 431-446 (PGTG…QSSG). The span at 454 to 472 (GSKSSSSGHPCMSVSSLTL) shows a compositional bias: polar residues.

It localises to the secreted. Functionally, important for the epidermal barrier integrity. The protein is Corneodesmosin (CDSN) of Macaca mulatta (Rhesus macaque).